We begin with the raw amino-acid sequence, 311 residues long: Porphobilinogen deaminase (311 aa).

Cysteine 245 carries the S-(dipyrrolylmethanemethyl)cysteine modification.

The protein belongs to the HMBS family. Monomer. The cofactor is dipyrromethane.

It carries out the reaction 4 porphobilinogen + H2O = hydroxymethylbilane + 4 NH4(+). Its pathway is porphyrin-containing compound metabolism; protoporphyrin-IX biosynthesis; coproporphyrinogen-III from 5-aminolevulinate: step 2/4. In terms of biological role, tetrapolymerization of the monopyrrole PBG into the hydroxymethylbilane pre-uroporphyrinogen in several discrete steps. The sequence is that of Porphobilinogen deaminase from Acinetobacter baylyi (strain ATCC 33305 / BD413 / ADP1).